Consider the following 236-residue polypeptide: Small ribosomal subunit protein uS2c (236 aa).

The protein belongs to the universal ribosomal protein uS2 family.

The protein localises to the plastid. It is found in the chloroplast. The protein is Small ribosomal subunit protein uS2c (rps2) of Cucumis sativus (Cucumber).